A 264-amino-acid chain; its full sequence is Thymidylate synthase (264 aa).

Arginine 21 contributes to the dUMP binding site. Histidine 51 is a binding site for (6R)-5,10-methylene-5,6,7,8-tetrahydrofolate. 126–127 (RR) is a dUMP binding site. Catalysis depends on cysteine 146, which acts as the Nucleophile. Residues 166–169 (RSCD), asparagine 177, and 207–209 (HLY) each bind dUMP. Residue aspartate 169 participates in (6R)-5,10-methylene-5,6,7,8-tetrahydrofolate binding. Residue alanine 263 participates in (6R)-5,10-methylene-5,6,7,8-tetrahydrofolate binding.

This sequence belongs to the thymidylate synthase family. Bacterial-type ThyA subfamily. Homodimer.

The protein resides in the cytoplasm. The catalysed reaction is dUMP + (6R)-5,10-methylene-5,6,7,8-tetrahydrofolate = 7,8-dihydrofolate + dTMP. It participates in pyrimidine metabolism; dTTP biosynthesis. Functionally, catalyzes the reductive methylation of 2'-deoxyuridine-5'-monophosphate (dUMP) to 2'-deoxythymidine-5'-monophosphate (dTMP) while utilizing 5,10-methylenetetrahydrofolate (mTHF) as the methyl donor and reductant in the reaction, yielding dihydrofolate (DHF) as a by-product. This enzymatic reaction provides an intracellular de novo source of dTMP, an essential precursor for DNA biosynthesis. This chain is Thymidylate synthase, found in Edwardsiella ictaluri (strain 93-146).